The chain runs to 1637 residues: Endoribonuclease Dicer homolog 3b (1637 aa).

The disordered stretch occupies residues 1 to 40 (MADDEAAVLPPPPPLPPPCRPHRQLRPRGSRPTADTTPRT). Pro residues predominate over residues 9-19 (LPPPPPLPPPC). Residues 20–29 (RPHRQLRPRG) show a composition bias toward basic residues. The region spanning 46 to 222 (VFEAALRGNT…LHNCEAHISQ (177 aa)) is the Helicase ATP-binding domain. 59 to 66 (LDTGSGKT) lines the ATP pocket. Positions 169–172 (DECH) match the DECH box motif. Residues 404–556 (SFGSSNEVLC…ALYRHPNALS (153 aa)) form the Helicase C-terminal domain. The region spanning 581–671 (CVNLIRKYCE…VPLTEEPMDT (91 aa)) is the Dicer dsRNA-binding fold domain. A PAZ domain is found at 882–1006 (EIIHLANKSL…VPPELLIHLD (125 aa)). The region spanning 1031–1200 (ASQLRREIGY…LVGAYYVGGG (170 aa)) is the RNase III 1 domain. Positions 1214, 1309, and 1312 each coordinate Mg(2+). Residues 1241 to 1389 (IEELEAKLKY…IAGAVFIDTD (149 aa)) enclose the RNase III 2 domain. DRBM domains follow at residues 1412 to 1481 (LALP…DLKQ) and 1545 to 1629 (GPRS…KLQE).

Belongs to the helicase family. Dicer subfamily. May interact with ARGONAUTE1 or PINHEAD through their common PAZ domains. Mg(2+) serves as cofactor. Requires Mn(2+) as cofactor.

It localises to the nucleus. Functionally, probably involved in the RNA silencing pathway. May cleave double-stranded RNA to produce short 21-24 nucleotides (nt) RNAs which target the selective destruction of complementary RNAs. The protein is Endoribonuclease Dicer homolog 3b (DCL3B) of Oryza sativa subsp. japonica (Rice).